A 336-amino-acid polypeptide reads, in one-letter code: Anthranilate phosphoribosyltransferase (336 aa).

Residues glycine 79, 82 to 83 (GD), threonine 87, 89 to 92 (NIST), 107 to 115 (KHGNRSVSS), and serine 119 each bind 5-phospho-alpha-D-ribose 1-diphosphate. Glycine 79 contacts anthranilate. Mg(2+) is bound at residue serine 91. Residue asparagine 110 participates in anthranilate binding. Arginine 165 contributes to the anthranilate binding site. Mg(2+) is bound by residues aspartate 224 and glutamate 225.

The protein belongs to the anthranilate phosphoribosyltransferase family. As to quaternary structure, homodimer. The cofactor is Mg(2+).

It carries out the reaction N-(5-phospho-beta-D-ribosyl)anthranilate + diphosphate = 5-phospho-alpha-D-ribose 1-diphosphate + anthranilate. Its pathway is amino-acid biosynthesis; L-tryptophan biosynthesis; L-tryptophan from chorismate: step 2/5. Catalyzes the transfer of the phosphoribosyl group of 5-phosphorylribose-1-pyrophosphate (PRPP) to anthranilate to yield N-(5'-phosphoribosyl)-anthranilate (PRA). The protein is Anthranilate phosphoribosyltransferase of Endomicrobium trichonymphae.